The primary structure comprises 103 residues: Large ribosomal subunit protein bL25 (103 aa).

This sequence belongs to the bacterial ribosomal protein bL25 family. As to quaternary structure, part of the 50S ribosomal subunit; part of the 5S rRNA/L5/L18/L25 subcomplex. Contacts the 5S rRNA. Binds to the 5S rRNA independently of L5 and L18.

Functionally, this is one of the proteins that binds to the 5S RNA in the ribosome where it forms part of the central protuberance. This Blochmanniella floridana protein is Large ribosomal subunit protein bL25.